We begin with the raw amino-acid sequence, 374 residues long: Homoserine O-succinyltransferase (374 aa).

Residues 47 to 357 (NAILVCHALS…NFGHDSFLME (311 aa)) enclose the AB hydrolase-1 domain. The active-site Nucleophile is Ser153. Arg223 is a binding site for substrate. Active-site residues include Asp318 and His351. Residue Asp352 coordinates substrate.

It belongs to the AB hydrolase superfamily. MetX family. Homodimer.

The protein localises to the cytoplasm. It carries out the reaction L-homoserine + succinyl-CoA = O-succinyl-L-homoserine + CoA. It functions in the pathway amino-acid biosynthesis; L-methionine biosynthesis via de novo pathway; O-succinyl-L-homoserine from L-homoserine: step 1/1. Transfers a succinyl group from succinyl-CoA to L-homoserine, forming succinyl-L-homoserine. The protein is Homoserine O-succinyltransferase of Dechloromonas aromatica (strain RCB).